Reading from the N-terminus, the 343-residue chain is Phosphate acyltransferase (343 aa).

The protein belongs to the PlsX family. As to quaternary structure, homodimer. Probably interacts with PlsY.

The protein resides in the cytoplasm. It carries out the reaction a fatty acyl-[ACP] + phosphate = an acyl phosphate + holo-[ACP]. It functions in the pathway lipid metabolism; phospholipid metabolism. Its function is as follows. Catalyzes the reversible formation of acyl-phosphate (acyl-PO(4)) from acyl-[acyl-carrier-protein] (acyl-ACP). This enzyme utilizes acyl-ACP as fatty acyl donor, but not acyl-CoA. This chain is Phosphate acyltransferase, found in Neorickettsia sennetsu (strain ATCC VR-367 / Miyayama) (Ehrlichia sennetsu).